Reading from the N-terminus, the 154-residue chain is Sperm microtubule associated protein 1 (154 aa).

The sequence is that of Sperm microtubule associated protein 1 from Homo sapiens (Human).